The primary structure comprises 418 residues: Trans-acting enoyl reductase (418 aa).

This sequence belongs to the saccharopine dehydrogenase family. Enoyl reductase subfamily.

Functionally, involved in the reduction of the double bond between C-4 and C-5 during phthiocerol dimycocerosates (DIM A) and glycosylated phenolphthiocerol dimycocerosates (PGL) biosynthesis. The polypeptide is Trans-acting enoyl reductase (Mycobacterium ulcerans (strain Agy99)).